Here is a 496-residue protein sequence, read N- to C-terminus: Adenosylhomocysteinase (496 aa).

Threonine 68, aspartate 157, and glutamate 219 together coordinate substrate. 220–222 (TTT) provides a ligand contact to NAD(+). 2 residues coordinate substrate: lysine 249 and aspartate 253. Residues asparagine 254, 283 to 288 (GYGDVG), glutamate 306, asparagine 341, 362 to 364 (IGH), and asparagine 410 contribute to the NAD(+) site.

Belongs to the adenosylhomocysteinase family. NAD(+) serves as cofactor.

The protein resides in the cytoplasm. The catalysed reaction is S-adenosyl-L-homocysteine + H2O = L-homocysteine + adenosine. It functions in the pathway amino-acid biosynthesis; L-homocysteine biosynthesis; L-homocysteine from S-adenosyl-L-homocysteine: step 1/1. In terms of biological role, may play a key role in the regulation of the intracellular concentration of adenosylhomocysteine. The protein is Adenosylhomocysteinase of Mycolicibacterium paratuberculosis (strain ATCC BAA-968 / K-10) (Mycobacterium paratuberculosis).